We begin with the raw amino-acid sequence, 81 residues long: uncharacterized protein (81 aa).

Positions 55 to 81 are disordered; the sequence is LDKRNSNNKIEKSENTGENHDNNQDQK.

This is an uncharacterized protein from Thermoproteus tenax virus 1 (strain KRA1) (TTV1).